Here is a 214-residue protein sequence, read N- to C-terminus: Adenylate kinase (214 aa).

Position 10–15 (10–15 (GAGKGT)) interacts with ATP. The tract at residues 30–59 (STGDMLRAAVKAGSELGLKAKEIMDAGKLV) is NMP. Residues Thr31, Arg36, 57–59 (KLV), 85–88 (GFPR), and Gln92 contribute to the AMP site. The LID stretch occupies residues 122–159 (GRRVHAPSGRVYHVTFNPPRVEGKDDMTGEELTTRKDD). Residues Arg123 and 132–133 (VY) contribute to the ATP site. The AMP site is built by Arg156 and Arg167. An ATP-binding site is contributed by Arg200.

It belongs to the adenylate kinase family. Monomer.

The protein resides in the cytoplasm. The catalysed reaction is AMP + ATP = 2 ADP. It functions in the pathway purine metabolism; AMP biosynthesis via salvage pathway; AMP from ADP: step 1/1. In terms of biological role, catalyzes the reversible transfer of the terminal phosphate group between ATP and AMP. Plays an important role in cellular energy homeostasis and in adenine nucleotide metabolism. The sequence is that of Adenylate kinase from Erwinia tasmaniensis (strain DSM 17950 / CFBP 7177 / CIP 109463 / NCPPB 4357 / Et1/99).